Here is a 171-residue protein sequence, read N- to C-terminus: UPF0725 protein At3g25080 (171 aa).

The protein belongs to the UPF0725 (EMB2204) family.

The sequence is that of UPF0725 protein At3g25080 from Arabidopsis thaliana (Mouse-ear cress).